Here is a 359-residue protein sequence, read N- to C-terminus: Fructose-bisphosphate aldolase (359 aa).

Position 62 (S62) interacts with D-glyceraldehyde 3-phosphate. D110 (proton donor) is an active-site residue. Residues H111, D145, E175, and H227 each coordinate Zn(2+). G228 contributes to the dihydroxyacetone phosphate binding site. A Zn(2+)-binding site is contributed by H265. Residues 266-268 (GGS) and 287-290 (NIDT) each bind dihydroxyacetone phosphate.

The protein belongs to the class II fructose-bisphosphate aldolase family. As to quaternary structure, homodimer. The cofactor is Zn(2+).

The enzyme catalyses beta-D-fructose 1,6-bisphosphate = D-glyceraldehyde 3-phosphate + dihydroxyacetone phosphate. The protein operates within carbohydrate degradation; glycolysis; D-glyceraldehyde 3-phosphate and glycerone phosphate from D-glucose: step 4/4. Catalyzes the aldol condensation of dihydroxyacetone phosphate (DHAP or glycerone-phosphate) with glyceraldehyde 3-phosphate (G3P) to form fructose 1,6-bisphosphate (FBP) in gluconeogenesis and the reverse reaction in glycolysis. This is Fructose-bisphosphate aldolase (fba) from Haemophilus influenzae (strain ATCC 51907 / DSM 11121 / KW20 / Rd).